Consider the following 144-residue polypeptide: Large ribosomal subunit protein uL24 (144 aa).

Residues 102-144 form a disordered region; it reads NIVVEKPEPEPEPRKEETAEAQEAKEEAVAEEKTEVDDNDKQN. Positions 103 to 134 are enriched in basic and acidic residues; that stretch reads IVVEKPEPEPEPRKEETAEAQEAKEEAVAEEK. Positions 135–144 are enriched in acidic residues; that stretch reads TEVDDNDKQN.

It belongs to the universal ribosomal protein uL24 family. Part of the 50S ribosomal subunit.

Functionally, one of two assembly initiator proteins, it binds directly to the 5'-end of the 23S rRNA, where it nucleates assembly of the 50S subunit. Located at the polypeptide exit tunnel on the outside of the subunit. This Thermoplasma acidophilum (strain ATCC 25905 / DSM 1728 / JCM 9062 / NBRC 15155 / AMRC-C165) protein is Large ribosomal subunit protein uL24 (rpl24).